The primary structure comprises 151 residues: UPF0756 membrane protein Hore_21770 (151 aa).

A run of 5 helical transmembrane segments spans residues 7–29 (LLIITILGFLARSRVLVIAGLLL), 49–69 (IEIGLIFLLMAILSSLVLSPV), 84–104 (TVAIIAGVLATKFNGMGLDLL), 110–130 (FILGIIMGSLVGIVFFGGIPV), and 131–151 (GPLMAAGIGAVLFKIIEIIKG).

Belongs to the UPF0756 family.

It is found in the cell membrane. In Halothermothrix orenii (strain H 168 / OCM 544 / DSM 9562), this protein is UPF0756 membrane protein Hore_21770.